The sequence spans 355 residues: Protein RecA (355 aa).

67-74 serves as a coordination point for ATP; sequence GPESSGKT.

Belongs to the RecA family.

It localises to the cytoplasm. Functionally, can catalyze the hydrolysis of ATP in the presence of single-stranded DNA, the ATP-dependent uptake of single-stranded DNA by duplex DNA, and the ATP-dependent hybridization of homologous single-stranded DNAs. It interacts with LexA causing its activation and leading to its autocatalytic cleavage. This Histophilus somni (strain 129Pt) (Haemophilus somnus) protein is Protein RecA.